A 357-amino-acid polypeptide reads, in one-letter code: Peptide chain release factor 1 (357 aa).

Glutamine 236 is subject to N5-methylglutamine.

It belongs to the prokaryotic/mitochondrial release factor family. In terms of processing, methylated by PrmC. Methylation increases the termination efficiency of RF1.

Its subcellular location is the cytoplasm. Functionally, peptide chain release factor 1 directs the termination of translation in response to the peptide chain termination codons UAG and UAA. The sequence is that of Peptide chain release factor 1 from Mycobacterium avium (strain 104).